Reading from the N-terminus, the 253-residue chain is Claudin domain-containing protein 1 (253 aa).

The helical transmembrane segment at Phe-5 to Ala-25 threads the bilayer. 2 N-linked (GlcNAc...) asparagine glycosylation sites follow: Asn-42 and Asn-72. The next 3 membrane-spanning stretches (helical) occupy residues Phe-141–Ala-161, Ile-175–Ile-195, and Phe-216–Ala-236.

Belongs to the PMP-22/EMP/MP20 family. Widely distributed in the adult CNS with highest expression in the corpus callosum, caudate nucleus, cerebral cortex, medulla, putamen, spinal cord, substantia nigra and subthalamic nucleus. Weak expression was detected in the adult heart.

The protein resides in the cell junction. It is found in the tight junction. It localises to the cell membrane. In terms of biological role, plays a role in negatively regulating the permeability of cells to small molecules. The protein is Claudin domain-containing protein 1 (CLDND1) of Homo sapiens (Human).